The following is a 268-amino-acid chain: Testis-specific serine/threonine-protein kinase 3 (268 aa).

The Protein kinase domain maps to 10–265; sequence YQLGKTIGEG…IEEVSWHPWL (256 aa). ATP is bound by residues 16 to 24 and K39; that span reads IGEGTYSKV. D134 acts as the Proton acceptor in catalysis. The residue at position 166 (S166) is a Phosphoserine. The residue at position 168 (T168) is a Phosphothreonine.

This sequence belongs to the protein kinase superfamily. CAMK Ser/Thr protein kinase family. Mg(2+) is required as a cofactor. Requires Mn(2+) as cofactor. In terms of processing, autophosphorylated at Ser-166. Phosphorylation at Thr-168 by PDPK1 activates the serine/threonine protein kinase activity.

The protein localises to the cell projection. It is found in the cilium. It localises to the flagellum. It carries out the reaction L-seryl-[protein] + ATP = O-phospho-L-seryl-[protein] + ADP + H(+). The catalysed reaction is L-threonyl-[protein] + ATP = O-phospho-L-threonyl-[protein] + ADP + H(+). Activated by phosphorylation on Thr-168 by PDPK1. Serine/threonine protein kinase required for spermatid development and male fertility. This chain is Testis-specific serine/threonine-protein kinase 3, found in Homo sapiens (Human).